Here is a 39-residue protein sequence, read N- to C-terminus: Potassium channel toxin alpha-KTx 2.18 (39 aa).

3 disulfides stabilise this stretch: Cys7-Cys29, Cys13-Cys34, and Cys17-Cys36. Position 39 is an isoleucine amide (Ile39).

Belongs to the short scorpion toxin superfamily. Potassium channel inhibitor family. Alpha-KTx 02 subfamily. In terms of tissue distribution, expressed by the venom gland.

It localises to the secreted. Its function is as follows. Weakly blocks Kv1.3/KCNA3 voltage-gated potassium channels. The polypeptide is Potassium channel toxin alpha-KTx 2.18 (Centruroides limpidus (Mexican scorpion)).